The sequence spans 118 residues: Vitelline membrane protein Vm32E (118 aa).

The signal sequence occupies residues 1 to 17 (MKIVALTLVAFVALAGA). In terms of domain architecture, VM spans 36–75 (GYPAPPCPTNYLFSCQPNLAPAPCAQEAQAPAYGSAGAYT).

It belongs to the vitelline membrane family.

It is found in the secreted. Functionally, major early eggshell protein. This Drosophila sechellia (Fruit fly) protein is Vitelline membrane protein Vm32E.